The sequence spans 228 residues: Ribonuclease 3 (228 aa).

The 129-residue stretch at 2-130 (LTYLEQKINY…LLAAVYLDGG (129 aa)) folds into the RNase III domain. Glutamate 43 is a binding site for Mg(2+). Aspartate 47 is a catalytic residue. Aspartate 116 and glutamate 119 together coordinate Mg(2+). Glutamate 119 is a catalytic residue. Residues 157 to 226 (DYKTRLQEVV…AMEALSKLGI (70 aa)) enclose the DRBM domain.

It belongs to the ribonuclease III family. Homodimer. The cofactor is Mg(2+).

Its subcellular location is the cytoplasm. It catalyses the reaction Endonucleolytic cleavage to 5'-phosphomonoester.. Its function is as follows. Digests double-stranded RNA. Involved in the processing of primary rRNA transcript to yield the immediate precursors to the large and small rRNAs (23S and 16S). Processes some mRNAs, and tRNAs when they are encoded in the rRNA operon. Processes pre-crRNA and tracrRNA of type II CRISPR loci if present in the organism. This is Ribonuclease 3 from Caldanaerobacter subterraneus subsp. tengcongensis (strain DSM 15242 / JCM 11007 / NBRC 100824 / MB4) (Thermoanaerobacter tengcongensis).